The sequence spans 127 residues: Small ribosomal subunit protein uS11 (127 aa).

This sequence belongs to the universal ribosomal protein uS11 family. As to quaternary structure, part of the 30S ribosomal subunit. Interacts with proteins S7 and S18. Binds to IF-3.

Located on the platform of the 30S subunit, it bridges several disparate RNA helices of the 16S rRNA. Forms part of the Shine-Dalgarno cleft in the 70S ribosome. The polypeptide is Small ribosomal subunit protein uS11 (Ehrlichia ruminantium (strain Gardel)).